A 348-amino-acid polypeptide reads, in one-letter code: GTPase Obg 1 (348 aa).

In terms of domain architecture, Obg spans 1–159 (MSFVDEAKIH…HCVLLKLKIV (159 aa)). One can recognise an OBG-type G domain in the interval 160–329 (SDVGIIGMPN…LHAQVKKAVV (170 aa)). Residues 166-173 (GMPNAGKS), 191-195 (FTTLE), 212-215 (DIPG), 279-282 (NKCD), and 310-312 (GDE) contribute to the GTP site. Mg(2+)-binding residues include Ser-173 and Thr-193.

This sequence belongs to the TRAFAC class OBG-HflX-like GTPase superfamily. OBG GTPase family. Monomer. The cofactor is Mg(2+).

It is found in the cytoplasm. Functionally, an essential GTPase which binds GTP, GDP and possibly (p)ppGpp with moderate affinity, with high nucleotide exchange rates and a fairly low GTP hydrolysis rate. Plays a role in control of the cell cycle, stress response, ribosome biogenesis and in those bacteria that undergo differentiation, in morphogenesis control. This chain is GTPase Obg 1, found in Anaplasma marginale (strain Florida).